The chain runs to 405 residues: 26S proteasome regulatory subunit 8 homolog (405 aa).

Residue Thr2 is modified to N-acetylthreonine. 189–196 provides a ligand contact to ATP; the sequence is GPPGTGKT.

This sequence belongs to the AAA ATPase family. In terms of assembly, may form a homodimer or a heterodimer with a related family member. Interacts with OLA1, TMA17, and UBR1. Post-translationally, N-acetylated by NAT1.

The protein localises to the cytoplasm. Its subcellular location is the nucleus. Functionally, the 26S proteasome is involved in the ATP-dependent degradation of ubiquitinated proteins. The regulatory (or ATPase) complex confers ATP dependency and substrate specificity to the 26S complex. This is 26S proteasome regulatory subunit 8 homolog (RPT6) from Saccharomyces cerevisiae (strain ATCC 204508 / S288c) (Baker's yeast).